The primary structure comprises 258 residues: Ureidoacrylate amidohydrolase RutB (258 aa).

The disordered stretch occupies residues 1–23 (MDRPTTYPMDQPAGFRDAQGRHG). Catalysis depends on Asp-47, which acts as the Proton acceptor. Residue Lys-156 is part of the active site. Cys-189 functions as the Nucleophile in the catalytic mechanism.

This sequence belongs to the isochorismatase family. RutB subfamily.

The enzyme catalyses (Z)-3-ureidoacrylate + H2O + H(+) = (Z)-3-aminoacrylate + NH4(+) + CO2. The catalysed reaction is (Z)-3-ureidoacrylate + H2O = (Z)-3-aminoacrylate + carbamate + H(+). It catalyses the reaction (Z)-2-methylureidoacrylate + H2O + H(+) = (Z)-2-methylaminoacrylate + NH4(+) + CO2. Its function is as follows. Hydrolyzes ureidoacrylate to form aminoacrylate and carbamate. The carbamate hydrolyzes spontaneously, thereby releasing one of the nitrogen atoms of the pyrimidine ring as ammonia and one of its carbon atoms as CO2. The polypeptide is Ureidoacrylate amidohydrolase RutB (Methylobacterium radiotolerans (strain ATCC 27329 / DSM 1819 / JCM 2831 / NBRC 15690 / NCIMB 10815 / 0-1)).